A 533-amino-acid chain; its full sequence is Fimbrial subunit type 1 (533 aa).

A signal peptide spans 1-30 (MHSLNTRRGLGLAAAMTLAAGALVAPTGAA). Positions 496–500 (LPLTG) match the LPXTG sorting signal motif. Pentaglycyl murein peptidoglycan amidated threonine is present on Thr499. Residues 500 to 533 (GANGVIFLTIAGALLVAGGAVVAYANKRRHVAKH) constitute a propeptide, removed by sortase.

The protein resides in the secreted. Its subcellular location is the cell wall. It localises to the fimbrium. Its function is as follows. Major fimbrial subunit of A.viscosus. In Actinomyces viscosus, this protein is Fimbrial subunit type 1.